A 487-amino-acid polypeptide reads, in one-letter code: Kynureninase 1 (487 aa).

Pyridoxal 5'-phosphate contacts are provided by residues Leu-149, Thr-150, 177–180, Ser-234, Asp-263, His-266, and Tyr-288; that span reads FPSD. Lys-289 is subject to N6-(pyridoxal phosphate)lysine. The pyridoxal 5'-phosphate site is built by Trp-329 and Asn-357.

The protein belongs to the kynureninase family. Homodimer. Pyridoxal 5'-phosphate serves as cofactor.

It is found in the cytoplasm. It carries out the reaction L-kynurenine + H2O = anthranilate + L-alanine + H(+). The catalysed reaction is 3-hydroxy-L-kynurenine + H2O = 3-hydroxyanthranilate + L-alanine + H(+). Its pathway is amino-acid degradation; L-kynurenine degradation; L-alanine and anthranilate from L-kynurenine: step 1/1. It participates in cofactor biosynthesis; NAD(+) biosynthesis; quinolinate from L-kynurenine: step 2/3. In terms of biological role, catalyzes the cleavage of L-kynurenine (L-Kyn) and L-3-hydroxykynurenine (L-3OHKyn) into anthranilic acid (AA) and 3-hydroxyanthranilic acid (3-OHAA), respectively. This Emericella nidulans (strain FGSC A4 / ATCC 38163 / CBS 112.46 / NRRL 194 / M139) (Aspergillus nidulans) protein is Kynureninase 1 (bna5-1).